The sequence spans 163 residues: uncharacterized protein (163 aa).

Positions 136–161 (QKYIENHQKEINEHVEKLRTLHKELR) form a coiled coil.

This is an uncharacterized protein from Acanthamoeba polyphaga (Amoeba).